The sequence spans 298 residues: ATP synthase gamma chain (298 aa).

This sequence belongs to the ATPase gamma chain family. F-type ATPases have 2 components, CF(1) - the catalytic core - and CF(0) - the membrane proton channel. CF(1) has five subunits: alpha(3), beta(3), gamma(1), delta(1), epsilon(1). CF(0) has three main subunits: a, b and c.

It is found in the cell inner membrane. Functionally, produces ATP from ADP in the presence of a proton gradient across the membrane. The gamma chain is believed to be important in regulating ATPase activity and the flow of protons through the CF(0) complex. The sequence is that of ATP synthase gamma chain from Granulibacter bethesdensis (strain ATCC BAA-1260 / CGDNIH1).